The sequence spans 125 residues: Histone H2A (125 aa).

The segment covering Met1–Ser18 has biased composition (basic residues). The interval Met1–Ala21 is disordered. An N-acetylserine modification is found at Ser2. At Ser2 the chain carries Phosphoserine. A Glycyl lysine isopeptide (Lys-Gly) (interchain with G-Cter in ubiquitin) cross-link involves residue Lys119.

The protein belongs to the histone H2A family. The nucleosome is a histone octamer containing two molecules each of H2A, H2B, H3 and H4 assembled in one H3-H4 heterotetramer and two H2A-H2B heterodimers. The octamer wraps approximately 147 bp of DNA. Monoubiquitination of Lys-119 gives a specific tag for epigenetic transcriptional repression. In terms of processing, phosphorylation on Ser-2 is enhanced during mitosis. Phosphorylation on Ser-2 directly represses transcription.

It is found in the nucleus. Its subcellular location is the chromosome. Core component of nucleosome. Nucleosomes wrap and compact DNA into chromatin, limiting DNA accessibility to the cellular machineries which require DNA as a template. Histones thereby play a central role in transcription regulation, DNA repair, DNA replication and chromosomal stability. DNA accessibility is regulated via a complex set of post-translational modifications of histones, also called histone code, and nucleosome remodeling. The protein is Histone H2A of Chironomus thummi thummi (Midge).